A 373-amino-acid chain; its full sequence is Putative ribosome biogenesis protein C8F11.04 (373 aa).

The tract at residues 265–373 (RKVVTKETAS…VKAGKNKVKH (109 aa)) is disordered. Positions 292–320 (KVEVAKESKDSKQQNVSDKKQVTVKEVPK) are enriched in basic and acidic residues. Polar residues predominate over residues 347–359 (KVSQSSLKANGTT). Residues 362 to 373 (KKVKAGKNKVKH) are compositionally biased toward basic residues.

Belongs to the universal ribosomal protein uL1 family. Highly divergent. As to quaternary structure, component of the 90S pre-ribosomes.

It is found in the nucleus. It localises to the nucleolus. Functionally, involved in rRNA-processing and ribosome biosynthesis. This chain is Putative ribosome biogenesis protein C8F11.04, found in Schizosaccharomyces pombe (strain 972 / ATCC 24843) (Fission yeast).